We begin with the raw amino-acid sequence, 397 residues long: Dimethyladenosine transferase 2, mitochondrial (397 aa).

The transit peptide at 1–44 (MRGLAMRLPPRLALSVLAGRGPSCILGSGAATRKDWQERNRRSF) directs the protein to the mitochondrion. Residues Ile75, Glu124, and Asp150 each contribute to the S-adenosyl-L-methionine site. The DNA-binding stretch occupies residues 329–330 (KR).

This sequence belongs to the class I-like SAM-binding methyltransferase superfamily. rRNA adenine N(6)-methyltransferase family. KsgA subfamily. As to quaternary structure, homodimer. Component of the mitochondrial transcription initiation complex, composed at least of TFB2M, TFAM and POLRMT. In this complex TFAM recruits POLRMT to the promoter whereas TFB2M induces structural changes in POLRMT to enable promoter opening and trapping of the DNA non-template strand. Interacts with mitochondrial RNA polymerase POLRMT. Interacts with TFAM.

It localises to the mitochondrion. It carries out the reaction adenosine in rRNA + S-adenosyl-L-methionine = N(6)-methyladenosine in rRNA + S-adenosyl-L-homocysteine + H(+). S-adenosyl-L-methionine-dependent rRNA methyltransferase which may methylate two specific adjacent adenosines in the loop of a conserved hairpin near the 3'-end of 12S mitochondrial rRNA. Component of the mitochondrial transcription initiation complex, composed at least of TFB2M, TFAM and POLRMT that is required for basal transcription of mitochondrial DNA. In this complex TFAM recruits POLRMT to a specific promoter whereas TFB2M induces structural changes in POLRMT to enable promoter opening and trapping of the DNA non-template strand. Stimulates transcription independently of the methyltransferase activity. This Rattus norvegicus (Rat) protein is Dimethyladenosine transferase 2, mitochondrial.